A 261-amino-acid polypeptide reads, in one-letter code: Bidirectional sugar transporter SWEET1b (261 aa).

At Met-1–Lys-6 the chain is on the extracellular side. A helical transmembrane segment spans residues Phe-7–Thr-27. The 89-residue stretch at Phe-7–His-95 folds into the MtN3/slv 1 domain. The Cytoplasmic segment spans residues Phe-28–Gly-42. A helical transmembrane segment spans residues Val-43–Val-63. The Extracellular portion of the chain corresponds to Ser-64–Ser-71. Residues Thr-72 to Ala-92 form a helical membrane-spanning segment. At Ser-93–Thr-101 the chain is on the cytoplasmic side. Residues Leu-102 to Ala-122 form a helical membrane-spanning segment. Residues Leu-123 to Lys-129 lie on the Extracellular side of the membrane. Residues Leu-130–Ile-150 traverse the membrane as a helical segment. One can recognise a MtN3/slv 2 domain in the interval Gly-133–Lys-215. Residues Met-151–Pro-164 lie on the Cytoplasmic side of the membrane. Residues Phe-165–Gly-185 form a helical membrane-spanning segment. Topologically, residues Arg-186–Phe-189 are extracellular. The chain crosses the membrane as a helical span at residues Val-190–Ile-210. At Tyr-211–Val-261 the chain is on the cytoplasmic side. The disordered stretch occupies residues Gly-218–Val-261.

This sequence belongs to the SWEET sugar transporter family. In terms of assembly, forms homodimers. In terms of tissue distribution, highly expressed in leaves. Expressed at very low levels in roots, stems and panicles.

The protein localises to the cell membrane. It carries out the reaction D-glucose(out) = D-glucose(in). The catalysed reaction is D-galactose(in) = D-galactose(out). Mediates transport of sugars across the plasma membrane. Can transport glucose and galactose, but not fructose, mannose and sucrose. This Oryza sativa subsp. japonica (Rice) protein is Bidirectional sugar transporter SWEET1b (SWEET1B).